Reading from the N-terminus, the 1501-residue chain is Protein SNQ2 (1501 aa).

The segment covering Met-1–Arg-17 has biased composition (polar residues). Residues Met-1–Ala-56 form a disordered region. Ser-2 bears the N-acetylserine mark. Over residues Ser-18 to Phe-30 the composition is skewed to low complexity. 2 positions are modified to phosphoserine: Ser-26 and Ser-29. Residues Thr-34–Thr-49 are compositionally biased toward basic and acidic residues. Residues Ser-64, Ser-80, and Ser-86 each carry the phosphoserine modification. The ABC transporter 1 domain maps to Phe-161 to Pro-410. Asn-273, Asn-334, and Asn-518 each carry an N-linked (GlcNAc...) asparagine glycan. The next 5 helical transmembrane spans lie at Tyr-521 to Tyr-541, Gly-554 to Phe-574, Leu-600 to Leu-620, Gly-628 to Phe-648, and Ile-664 to Ile-680. Asn-730 is a glycosylation site (N-linked (GlcNAc...) asparagine). Residues Phe-771–Thr-789 traverse the membrane as a helical segment. The ABC transporter 2 domain occupies Phe-853–Ala-1095. N-linked (GlcNAc...) asparagine glycosylation is present at Asn-874. Gly-889–Thr-896 provides a ligand contact to ATP. Thr-1153 is subject to Phosphothreonine. A run of 4 helical transmembrane segments spans residues Ile-1190–Gly-1212, Val-1216–Met-1236, His-1277–Phe-1296, and Ala-1333–Gln-1352. Residue Asn-1401 is glycosylated (N-linked (GlcNAc...) asparagine). The chain crosses the membrane as a helical span at residues Phe-1455 to Leu-1475.

Belongs to the ABC transporter superfamily. ABCG family. PDR (TC 3.A.1.205) subfamily.

Its subcellular location is the membrane. Could be an ATP-dependent permease. Confers hyper-resistance to the mutagens 4-nitroquinoline-N-oxide (4-NQO) and triaziquone, as well as to the chemicals sulphomethuron methyl phenanthroline when present in multiple copies. Exhibits nucleoside triphosphatase activity. This is Protein SNQ2 (SNQ2) from Saccharomyces cerevisiae (strain ATCC 204508 / S288c) (Baker's yeast).